The sequence spans 296 residues: ADP-forming sulfoacetate-CoA ligase subunit SqwL (296 aa).

Residues 17–20 (TGSE), Lys43, and 96–98 (IAD) contribute to the CoA site. The active-site Tele-phosphohistidine intermediate is His251.

This sequence belongs to the succinate/malate CoA ligase alpha subunit family. In terms of assembly, forms a complex with SqwK.

The catalysed reaction is sulfoacetate + ATP + CoA = sulfoacetyl-CoA + ADP + phosphate. Functionally, part of a variant of the sulfo-TK pathway, a D-sulfoquinovose degradation pathway that produces sulfoacetate. Hydrolyzes sulfoacetyl-coenzyme A (sulfoacetyl-CoA) to produce sulfoacetate and CoA coupled with the phosphorylation of ADP to generate ATP. Cannot use succinate, acetate or 3-hydroxypropionate, and shows only residual activities with malonate and 3-sulfopropanoate. The sequence is that of ADP-forming sulfoacetate-CoA ligase subunit SqwL from Acholeplasma sp.